Here is a 210-residue protein sequence, read N- to C-terminus: Protein MSO1 (210 aa).

Met1 is modified (N-acetylmethionine). N-acetylserine is present on Met2. Positions 88–210 (KHDMKKQNSR…LKRRNNDYGF (123 aa)) are disordered. Ser102 is modified (phosphoserine). Polar residues predominate over residues 117–141 (TPSSNGNTPEYTPASKSFQDIYNNH). 2 stretches are compositionally biased toward low complexity: residues 142–161 (TSSS…RPSA) and 172–183 (SKTSNSFNTSST).

As to quaternary structure, interacts physically with SEC1.

Involved in secretion. Component of the secretory vesicle docking complex. This chain is Protein MSO1 (MSO1), found in Saccharomyces cerevisiae (strain ATCC 204508 / S288c) (Baker's yeast).